We begin with the raw amino-acid sequence, 329 residues long: Tryptophan--tRNA ligase (329 aa).

Residues 9–11 (QPS) and 17–18 (GN) contribute to the ATP site. The 'HIGH' region motif lies at 10–18 (PSGTITLGN). An L-tryptophan-binding site is contributed by Asp-132. ATP-binding positions include 144 to 146 (GDD), Val-183, and 192 to 196 (KMSKS). The short motif at 192-196 (KMSKS) is the 'KMSKS' region element.

Belongs to the class-I aminoacyl-tRNA synthetase family. Homodimer.

It localises to the cytoplasm. It carries out the reaction tRNA(Trp) + L-tryptophan + ATP = L-tryptophyl-tRNA(Trp) + AMP + diphosphate + H(+). Catalyzes the attachment of tryptophan to tRNA(Trp). This Bacillus anthracis protein is Tryptophan--tRNA ligase.